Here is a 411-residue protein sequence, read N- to C-terminus: Tyrosine--tRNA ligase (411 aa).

Tyr34 contacts L-tyrosine. The 'HIGH' region signature appears at Cys39–Ser48. L-tyrosine is bound by residues Tyr171 and Gln175. The short motif at Lys231–Thr235 is the 'KMSKS' region element. Residue Lys234 coordinates ATP. Positions Ile345 to Val411 constitute an S4 RNA-binding domain.

This sequence belongs to the class-I aminoacyl-tRNA synthetase family. TyrS type 1 subfamily. Homodimer.

It localises to the cytoplasm. The enzyme catalyses tRNA(Tyr) + L-tyrosine + ATP = L-tyrosyl-tRNA(Tyr) + AMP + diphosphate + H(+). Functionally, catalyzes the attachment of tyrosine to tRNA(Tyr) in a two-step reaction: tyrosine is first activated by ATP to form Tyr-AMP and then transferred to the acceptor end of tRNA(Tyr). This is Tyrosine--tRNA ligase from Rickettsia peacockii (strain Rustic).